We begin with the raw amino-acid sequence, 79 residues long: Sec-independent protein translocase protein TatA (79 aa).

The helical transmembrane segment at 1–21 (MGGFTSIWHWVIVLLVIVLLF) threads the bilayer. Residues 48 to 79 (EEEAKNEPKTLDAQATQTKVHESSEIKSKQES) form a disordered region. Basic and acidic residues predominate over residues 66 to 79 (KVHESSEIKSKQES).

It belongs to the TatA/E family. The Tat system comprises two distinct complexes: a TatABC complex, containing multiple copies of TatA, TatB and TatC subunits, and a separate TatA complex, containing only TatA subunits. Substrates initially bind to the TatABC complex, which probably triggers association of the separate TatA complex to form the active translocon.

It localises to the cell inner membrane. Functionally, part of the twin-arginine translocation (Tat) system that transports large folded proteins containing a characteristic twin-arginine motif in their signal peptide across membranes. TatA could form the protein-conducting channel of the Tat system. The protein is Sec-independent protein translocase protein TatA of Helicobacter pylori (strain ATCC 700392 / 26695) (Campylobacter pylori).